The following is a 749-amino-acid chain: 1,4-alpha-glucan branching enzyme GlgB (749 aa).

The active-site Nucleophile is Asp415. Glu468 acts as the Proton donor in catalysis.

It belongs to the glycosyl hydrolase 13 family. GlgB subfamily. As to quaternary structure, monomer.

It catalyses the reaction Transfers a segment of a (1-&gt;4)-alpha-D-glucan chain to a primary hydroxy group in a similar glucan chain.. It participates in glycan biosynthesis; glycogen biosynthesis. Its function is as follows. Catalyzes the formation of the alpha-1,6-glucosidic linkages in glycogen by scission of a 1,4-alpha-linked oligosaccharide from growing alpha-1,4-glucan chains and the subsequent attachment of the oligosaccharide to the alpha-1,6 position. This chain is 1,4-alpha-glucan branching enzyme GlgB, found in Nitrosococcus oceani (strain ATCC 19707 / BCRC 17464 / JCM 30415 / NCIMB 11848 / C-107).